Reading from the N-terminus, the 351-residue chain is Ceramide hydroxylase (351 aa).

A run of 4 helical transmembrane segments spans residues 26–46, 47–67, 141–161, and 204–224; these read AAIY…GFLI, AATT…MLAL, GFLF…AILI, and VACW…VVPV.

This sequence belongs to the fatty acid desaturase type 1 family.

It is found in the cell inner membrane. It participates in lipid metabolism; sphingolipid metabolism. Involved in de novo bacterial ceramide synthesis. This chain is Ceramide hydroxylase, found in Caulobacter vibrioides (strain NA1000 / CB15N) (Caulobacter crescentus).